The primary structure comprises 189 residues: Threonylcarbamoyl-AMP synthase (189 aa).

Residues 9–189 (ASAQRKLSVY…IDGETGKRLR (181 aa)) form the YrdC-like domain.

This sequence belongs to the SUA5 family. TsaC subfamily.

It localises to the cytoplasm. It carries out the reaction L-threonine + hydrogencarbonate + ATP = L-threonylcarbamoyladenylate + diphosphate + H2O. Its function is as follows. Required for the formation of a threonylcarbamoyl group on adenosine at position 37 (t(6)A37) in tRNAs that read codons beginning with adenine. Catalyzes the conversion of L-threonine, HCO(3)(-)/CO(2) and ATP to give threonylcarbamoyl-AMP (TC-AMP) as the acyladenylate intermediate, with the release of diphosphate. In Neisseria gonorrhoeae (strain ATCC 700825 / FA 1090), this protein is Threonylcarbamoyl-AMP synthase.